The following is a 346-amino-acid chain: Dihydroorotase (346 aa).

Positions 14 and 16 each coordinate Zn(2+). Substrate contacts are provided by residues 16 to 18 (HLR) and asparagine 42. 3 residues coordinate Zn(2+): lysine 100, histidine 137, and histidine 175. An N6-carboxylysine modification is found at lysine 100. Residue histidine 137 participates in substrate binding. Position 220 (leucine 220) interacts with substrate. A Zn(2+)-binding site is contributed by aspartate 248. Aspartate 248 is an active-site residue. Histidine 252 and alanine 264 together coordinate substrate.

Belongs to the metallo-dependent hydrolases superfamily. DHOase family. Class II DHOase subfamily. Homodimer. The cofactor is Zn(2+).

It catalyses the reaction (S)-dihydroorotate + H2O = N-carbamoyl-L-aspartate + H(+). It functions in the pathway pyrimidine metabolism; UMP biosynthesis via de novo pathway; (S)-dihydroorotate from bicarbonate: step 3/3. Catalyzes the reversible cyclization of carbamoyl aspartate to dihydroorotate. This chain is Dihydroorotase, found in Novosphingobium aromaticivorans (strain ATCC 700278 / DSM 12444 / CCUG 56034 / CIP 105152 / NBRC 16084 / F199).